The primary structure comprises 192 residues: Casparian strip membrane protein 1 (192 aa).

Over 1-26 the chain is Cytoplasmic; that stretch reads MTKSVRLEEGDASKVLVPVGSNKGVS. The helical transmembrane segment at 27–47 threads the bilayer; it reads VMDLVLRLVGIAGTLGAAIAM. At 48-75 the chain is on the extracellular side; sequence GTNEQTLPFFTRFVVFNAEYDDFRSFRL. A helical transmembrane segment spans residues 76-96; sequence FVIVNAIVCAYFVLTLPLSIV. Topologically, residues 97–107 are cytoplasmic; sequence HIMRSAARGSR. A helical membrane pass occupies residues 108–128; that stretch reads ILLIIMDTVMLALLTAGASAA. Over 129 to 161 the chain is Extracellular; it reads ASIVYLAHNGNTSTNWLPVCQQYGDFCQGASGS. Residue asparagine 139 is glycosylated (N-linked (GlcNAc...) asparagine). The chain crosses the membrane as a helical span at residues 162–182; the sequence is LIGSFGAVVVFILIILLGAIA. The Cytoplasmic segment spans residues 183 to 192; that stretch reads LSRHAKRVVL.

Belongs to the Casparian strip membrane proteins (CASP) family. In terms of assembly, homodimer and heterodimers.

The protein resides in the cell membrane. Functionally, regulates membrane-cell wall junctions and localized cell wall deposition. Required for establishment of the Casparian strip membrane domain (CSD) and the subsequent formation of Casparian strips, a cell wall modification of the root endodermis that determines an apoplastic barrier between the intraorganismal apoplasm and the extraorganismal apoplasm and prevents lateral diffusion. This is Casparian strip membrane protein 1 from Lactuca saligna (Willowleaf lettuce).